The primary structure comprises 199 residues: Putative peroxiredoxin ycf42 (199 aa).

Residues 8 to 165 (LQVGQIAPDF…TLRVLQAIQY (158 aa)) form the Thioredoxin domain. Cys53 functions as the Cysteine sulfenic acid (-SOH) intermediate in the catalytic mechanism.

This sequence belongs to the peroxiredoxin family. AhpC/Prx1 subfamily. In terms of assembly, homodimer; disulfide-linked, upon oxidation. Post-translationally, the Cys-53-SH group is the primary site of oxidation by H(2)O(2), and the oxidized Cys-53 (probably Cys-SOH) rapidly reacts with Cys-174-SH of the other subunit to form an intermolecular disulfide. This disulfide is subsequently reduced by thioredoxin.

The protein resides in the plastid. It localises to the chloroplast. It catalyses the reaction a hydroperoxide + [thioredoxin]-dithiol = an alcohol + [thioredoxin]-disulfide + H2O. Its function is as follows. Thiol-specific peroxidase that catalyzes the reduction of hydrogen peroxide and organic hydroperoxides to water and alcohols, respectively. Plays a role in cell protection against oxidative stress by detoxifying peroxides. In Porphyra purpurea (Red seaweed), this protein is Putative peroxiredoxin ycf42 (ycf42).